The sequence spans 221 residues: Iron-sulfur cluster assembly SufBD family protein ycf24 (221 aa).

This sequence belongs to the iron-sulfur cluster assembly SufBD family.

It localises to the plastid. Its subcellular location is the chloroplast. This is Iron-sulfur cluster assembly SufBD family protein ycf24 (ycf24) from Galdieria sulphuraria (Red alga).